A 317-amino-acid chain; its full sequence is Transaldolase (317 aa).

Lys132 acts as the Schiff-base intermediate with substrate in catalysis.

The protein belongs to the transaldolase family. Type 1 subfamily. In terms of assembly, homodimer.

The protein localises to the cytoplasm. It carries out the reaction D-sedoheptulose 7-phosphate + D-glyceraldehyde 3-phosphate = D-erythrose 4-phosphate + beta-D-fructose 6-phosphate. The protein operates within carbohydrate degradation; pentose phosphate pathway; D-glyceraldehyde 3-phosphate and beta-D-fructose 6-phosphate from D-ribose 5-phosphate and D-xylulose 5-phosphate (non-oxidative stage): step 2/3. Functionally, transaldolase is important for the balance of metabolites in the pentose-phosphate pathway. The polypeptide is Transaldolase (Pseudoalteromonas atlantica (strain T6c / ATCC BAA-1087)).